Consider the following 223-residue polypeptide: Deoxyribose-phosphate aldolase (223 aa).

Asp-89 functions as the Proton donor/acceptor in the catalytic mechanism. The active-site Schiff-base intermediate with acetaldehyde is Lys-152. Lys-181 acts as the Proton donor/acceptor in catalysis.

It belongs to the DeoC/FbaB aldolase family. DeoC type 1 subfamily.

Its subcellular location is the cytoplasm. The enzyme catalyses 2-deoxy-D-ribose 5-phosphate = D-glyceraldehyde 3-phosphate + acetaldehyde. Its pathway is carbohydrate degradation; 2-deoxy-D-ribose 1-phosphate degradation; D-glyceraldehyde 3-phosphate and acetaldehyde from 2-deoxy-alpha-D-ribose 1-phosphate: step 2/2. Functionally, catalyzes a reversible aldol reaction between acetaldehyde and D-glyceraldehyde 3-phosphate to generate 2-deoxy-D-ribose 5-phosphate. This Bacillus cereus (strain ATCC 14579 / DSM 31 / CCUG 7414 / JCM 2152 / NBRC 15305 / NCIMB 9373 / NCTC 2599 / NRRL B-3711) protein is Deoxyribose-phosphate aldolase.